The following is a 245-amino-acid chain: Glucan endo-1,3-beta-glucosidase (245 aa).

The signal sequence occupies residues 1 to 23 (MMKTLVVVLSLSLTILSFGGAHA). 8 disulfide bridges follow: cysteine 32–cysteine 244, cysteine 80–cysteine 90, cysteine 95–cysteine 102, cysteine 150–cysteine 233, cysteine 155–cysteine 216, cysteine 163–cysteine 179, cysteine 183–cysteine 192, and cysteine 193–cysteine 203.

The protein belongs to the thaumatin family. Abundantly expressed in ripening fruit.

The protein localises to the secreted. The catalysed reaction is Hydrolysis of (1-&gt;3)-beta-D-glucosidic linkages in (1-&gt;3)-beta-D-glucans.. In Prunus avium (Cherry), this protein is Glucan endo-1,3-beta-glucosidase.